A 629-amino-acid chain; its full sequence is Chaperone protein HtpG (629 aa).

The interval Met-1 to Arg-337 is a; substrate-binding. Residues Glu-338–Gln-554 form a b region. The tract at residues Leu-555–Gly-629 is c.

This sequence belongs to the heat shock protein 90 family. In terms of assembly, homodimer.

Its subcellular location is the cytoplasm. In terms of biological role, molecular chaperone. Has ATPase activity. This chain is Chaperone protein HtpG, found in Acidithiobacillus ferrooxidans (strain ATCC 23270 / DSM 14882 / CIP 104768 / NCIMB 8455) (Ferrobacillus ferrooxidans (strain ATCC 23270)).